A 368-amino-acid polypeptide reads, in one-letter code: MRILQNKTMKEQDNQLKIPEPLRADWFMVLVTIQADLIYNALVVLSSPFFLLYRSYRRAVVTVSAAEKAVKRAPAQIAGGAGRVVRRTWFGILGACHVSMVMVLALILAVVIGVGIVSLYVEKPVVVRDRLFFDYTEENPSAVFSFDKKKRSFSVPVGHSVHVSLVLWMPESEINRRIGVFQLKVELLSLKGETIARSSQPCMLRFRSKPIRLARTFVMSVPLIAGIANEAQTMRIDALKHQEKMPRTKAVRATLIPRAQTRTLPQLYEAEIVINSKPPWIKRMAYNWKWTLCVWTSMYLYVAILTALLWCFRPVLFPYTSSRTISESENLEIEVVEEEQEQVMERRRRERRNQPRRRNFATTQKSYT.

Transmembrane regions (helical) follow at residues 26 to 46 (WFMV…VVLS), 101 to 121 (VMVL…SLYV), and 292 to 312 (LCVW…LWCF). The interval 344–368 (MERRRRERRNQPRRRNFATTQKSYT) is disordered. Basic residues predominate over residues 346–359 (RRRRERRNQPRRRN).

This sequence belongs to the seipin family. In terms of tissue distribution, expressed in seeds and young seedlings. Not detected in leaves.

It localises to the endoplasmic reticulum membrane. Its function is as follows. Involved in lipid metabolism and lipid droplet (LD) morphology, number, and size. Facilitates the formation of large-sized LDs and modulates triacylglycerol accumulation. Induces probably a reorganization of the endoplasmic reticulum into LD-forming domains. This Arabidopsis thaliana (Mouse-ear cress) protein is Seipin-1.